A 419-amino-acid polypeptide reads, in one-letter code: MLSKKLAIDHIPHLIKGKRVLMRVDFNVPIKEGKIKDLTRIQGALPSINYCLENGAESVVLMSHLGRPDGQRVEKHSLKPVLPAIEDLLKKKVQFLDDCVGSEVERECKSASKGKVILLENLRFHLAEEGKGVINGEKVKATKEDIAAFRKSLTSLGELYVNDGFGTAHRAHSSMVGVNVDTRAAGFLLKKELQYFSKILETPERPLTVVMGGAKVADKIQLIMKLLELADELIIGGGMAFTFNKVLDGSNIGKSLFDQEGAKIVPDIIKKAKERGVKIHLPVDAVAADKFEESAATQLVDLKTGAIPDGWMGLDIGPKTIEQNSRVILRAKTVFWNGPQGVFEMAPFSKGSLSMLDDIIKATQTGATSVAGGGDTVSLLGKVKGTTDKFSHVSTGGGASLELLQGKQLPGVVALSDRQ.

(2R)-3-phosphoglycerate contacts are provided by V24, D25, F26, N27, R40, S63, H64, G66, R67, L122, R123, H169, and R170. Residue G213 participates in ADP binding. G213 is a binding site for CDP. AMP-binding residues include A214 and K215. An ATP-binding site is contributed by A214. A214 lines the Mg(2+) pocket. Positions 217 and 218 each coordinate Mg(2+). Residue D218 participates in CDP binding. K219 provides a ligand contact to AMP. K219 provides a ligand contact to ATP. G237 is a binding site for ADP. A CDP-binding site is contributed by G237. 2 residues coordinate AMP: G238 and G313. 2 residues coordinate ATP: G238 and G313. G338 and F343 together coordinate CDP. F343 serves as a coordination point for ADP. Position 344 (E344) interacts with AMP. The ATP site is built by E344, D375, and T376. D375 is a binding site for Mg(2+).

It belongs to the phosphoglycerate kinase family. Monomer. It depends on Mg(2+) as a cofactor.

It carries out the reaction (2R)-3-phosphoglycerate + ATP = (2R)-3-phospho-glyceroyl phosphate + ADP. It participates in carbohydrate degradation; glycolysis; pyruvate from D-glyceraldehyde 3-phosphate: step 2/5. The chain is Phosphoglycerate kinase (PGK) from Sterkiella nova (Ciliate).